Reading from the N-terminus, the 1346-residue chain is MGYSYTEKKRIRKDFGKRPQVMEKPYLLSIQLDSFKRFIEVDLTGEVGLEAAFNSIFPIASYSGTSELQYVSYRLGEPVFDVKECQIRGVTYSASLRVKLRLVIYDRDAPAGTVKDIREQEVYMGEMPLMTENGTFVINGTERVIVSQLHRSPGVFFDHDKGKTHSSGKVLYNARVIPYRGSWLDFEFDPKDNLFVRIDRRRKLPATIMLRALEYSTQEILAIFYDTTKFDIKDGVISMSLIADRLRGEMALFDIAANGKIYVEQGKRITARHIKQLEKDNINTLDVPVEYIAEKDLVVAKDYISKETGEIIVSANDILTLEILAELTQSGITSFDIIYTNELDCGSFISDTLRVDSSSNRLEALVEIYRMMRPGEPPTKDAAEGLFHNLFFAEERYELSKVGRMKFNRRVGIDGDEGAGILSKDDILSVMKTLIAIRNGDGIVDDIDHLGNRRIRCVGEMAENQFRVGLVRVERAVRERLSLGDLDATMPQDLINAKPISAAVKEFFGSSQLSQFMDQNNPLSEVTHKRRISALGPGGLTRERAGFEVRDVHPTHYGRLCPIETPEGPNIGLINSLATFSRTNSYGFLETPYRKVENGKPTDQVEYLSAIEEGSFVIAQASASIDENGLLDEELIPCRHKGESTFLSPADIDYMDVSPQQIISVAASLIPFLEHDDANRALMGSNMQRQAVPTLRADKPLVGTGIERRLAIDSGVTIIAKRSGVIDYVDASRIVVKVDDNELLPGEAGIDIYNLTKYTRSNQNTCINQKPTCEPGEPIVRGDVLADGPSTDMGDLALGQNMKIAFMPWNGYNFEDSILISERVSQEDRFTTIHIQEFSCVARETKLGSEEISADIPNVGEAALSKLDESGIVYVGAEVKPGDILVGKVTPKGETQLTPEEKLLRAIFGEKASDVKDSSLRVAASTYATVIDVQVFTRDGVEKDKRALEIEEMQLKAAKKDLTEKFKILENAIYEKALAILVGAGQDEARLLQMPRAQWLEVQIDDETKQSYLDQIITQYDEVKADYDKEFDIKRRKITQGDDLAPGVQKIVKVYLAVRRRLQPGDKMAGRHGNKGVISNIVPVEDMPHDEFGVPVDIVLNPLGVPSRMNIGQVLETHLGLAAKGVGEKLERMIKYQRDIEITKVREFVQKLYSFGDAPCHVDLNDFDDEAVMRLAKNLYKGLPVATPAFDGANEGEIRELLRMADLPESGQLQLTDGRTGIQFERPVTVGYMYMLKLNHLVDDKMHARSTGSYSLVTQQPLGGKAQFGGQRFGEMEVWALEAYGAAYTLQEMLTVKSDDVNGRTKMYKNIVDGDHRMEPGMPESFNVLLKEIRSLSINIELDESN.

The protein belongs to the RNA polymerase beta chain family. In terms of assembly, the RNAP catalytic core consists of 2 alpha, 1 beta, 1 beta' and 1 omega subunit. When a sigma factor is associated with the core the holoenzyme is formed, which can initiate transcription.

The catalysed reaction is RNA(n) + a ribonucleoside 5'-triphosphate = RNA(n+1) + diphosphate. DNA-dependent RNA polymerase catalyzes the transcription of DNA into RNA using the four ribonucleoside triphosphates as substrates. The chain is DNA-directed RNA polymerase subunit beta from Psychromonas ingrahamii (strain DSM 17664 / CCUG 51855 / 37).